Here is a 380-residue protein sequence, read N- to C-terminus: Lipid-A-disaccharide synthase (380 aa).

This sequence belongs to the LpxB family.

It catalyses the reaction a lipid X + a UDP-2-N,3-O-bis[(3R)-3-hydroxyacyl]-alpha-D-glucosamine = a lipid A disaccharide + UDP + H(+). It functions in the pathway bacterial outer membrane biogenesis; LPS lipid A biosynthesis. In terms of biological role, condensation of UDP-2,3-diacylglucosamine and 2,3-diacylglucosamine-1-phosphate to form lipid A disaccharide, a precursor of lipid A, a phosphorylated glycolipid that anchors the lipopolysaccharide to the outer membrane of the cell. This is Lipid-A-disaccharide synthase from Francisella tularensis subsp. tularensis (strain FSC 198).